Reading from the N-terminus, the 160-residue chain is Cytochrome b6-f complex subunit 4 (160 aa).

3 helical membrane-spanning segments follow: residues 36 to 56 (LLYVFPVVIMGTIGLVVGLAV), 95 to 115 (LLGIACQAAIPLGLMLIPFIE), and 131 to 151 (TFFMIGTLVTLWLGAGAIFPI).

It belongs to the cytochrome b family. PetD subfamily. As to quaternary structure, the 4 large subunits of the cytochrome b6-f complex are cytochrome b6, subunit IV (17 kDa polypeptide, PetD), cytochrome f and the Rieske protein, while the 4 small subunits are PetG, PetL, PetM and PetN. The complex functions as a dimer.

It is found in the cellular thylakoid membrane. Its function is as follows. Component of the cytochrome b6-f complex, which mediates electron transfer between photosystem II (PSII) and photosystem I (PSI), cyclic electron flow around PSI, and state transitions. In Gloeothece citriformis (strain PCC 7424) (Cyanothece sp. (strain PCC 7424)), this protein is Cytochrome b6-f complex subunit 4.